Reading from the N-terminus, the 1192-residue chain is Pyruvate carboxylase (1192 aa).

Positions 1 to 23 (MAAPRQPEEAVDDTEFIDDHHDQ) are disordered. One can recognise a Biotin carboxylation domain in the interval 40 to 492 (QFQKILVANR…WTTFIDDTPE (453 aa)). 3 residues coordinate ATP: Lys158, Glu242, and His277. In terms of domain architecture, ATP-grasp spans 162 to 359 (RQLAIRCDVP…IVAAQIQIAA (198 aa)). Residue Arg334 is part of the active site. Residues 578-846 (CLIMDTTWRD…DPGLNSAQVR (269 aa)) form the Pyruvate carboxyltransferase domain. Substrate is bound by residues 586–590 (RDAHQ) and Arg659. Asp587 serves as a coordination point for a divalent metal cation. Residues Lys755, His785, and His787 each contribute to the a divalent metal cation site. Position 755 is an N6-carboxylysine (Lys755). Position 920 (Thr920) interacts with substrate. The Biotinyl-binding domain occupies 1115 to 1190 (KAELGDSSQV…DGQDLVCKIV (76 aa)). The residue at position 1156 (Lys1156) is an N6-biotinyllysine.

Biotin is required as a cofactor. It depends on Zn(2+) as a cofactor.

Its subcellular location is the cytoplasm. The enzyme catalyses hydrogencarbonate + pyruvate + ATP = oxaloacetate + ADP + phosphate + H(+). Its pathway is carbohydrate biosynthesis; gluconeogenesis. Functionally, pyruvate carboxylase catalyzes a 2-step reaction, involving the ATP-dependent carboxylation of the covalently attached biotin in the first step and the transfer of the carboxyl group to pyruvate in the second. The sequence is that of Pyruvate carboxylase (pyc) from Aspergillus niger.